Consider the following 193-residue polypeptide: Acyl carrier protein phosphodiesterase (193 aa).

The protein belongs to the AcpH family.

It catalyses the reaction holo-[ACP] + H2O = apo-[ACP] + (R)-4'-phosphopantetheine + H(+). Converts holo-ACP to apo-ACP by hydrolytic cleavage of the phosphopantetheine prosthetic group from ACP. The sequence is that of Acyl carrier protein phosphodiesterase from Escherichia coli O7:K1 (strain IAI39 / ExPEC).